The chain runs to 1028 residues: U2 snRNP-associated SURP motif-containing protein (1028 aa).

Disordered stretches follow at residues 1–111 and 141–272; these read MADK…EDEK and VNAA…DPST. Ala-2 is modified (N-acetylalanine). The segment covering 7 to 16 has biased composition (polar residues); that stretch reads GGSQKASSKT. The segment covering 45-54 has biased composition (basic residues); the sequence is TRPKSPRKHN. The span at 55–64 shows a compositional bias: basic and acidic residues; sequence YRNESARESL. Phosphoserine is present on Ser-67. Lys-80 is covalently cross-linked (Glycyl lysine isopeptide (Lys-Gly) (interchain with G-Cter in SUMO2)). Residues 92–121 are a coiled coil; that stretch reads AKRTLSKKEQEELKKKEDEKAAAEIYEEFL. Composition is skewed to basic and acidic residues over residues 97–111 and 144–155; these read SKKE…EDEK and AKEEHETDEKRG. Residues Lys-145 and Lys-168 each participate in a glycyl lysine isopeptide (Lys-Gly) (interchain with G-Cter in SUMO2) cross-link. A compositionally biased stretch (polar residues) spans 169–178; that stretch reads NPPNQSSNER. Basic and acidic residues predominate over residues 186–222; that stretch reads ETKKPPLKKGEKEKKKSNLELFKEELKQIQEERDERH. Residues 192–232 are a coiled coil; that stretch reads LKKGEKEKKKSNLELFKEELKQIQEERDERHKTKGRLSRFE. Ser-202 bears the Phosphoserine mark. Residue Lys-208 forms a Glycyl lysine isopeptide (Lys-Gly) (interchain with G-Cter in SUMO2) linkage. At Ser-236 the chain carries Phosphoserine. Over residues 239 to 249 the composition is skewed to basic and acidic residues; it reads DGQRRSMDAPS. The RRM domain maps to 273 to 354; the sequence is TNLYLGNINP…FEMKLGWGKA (82 aa). The SURP motif repeat unit spans residues 429–472; it reads LIHRMIEFVVREGPMFEAMIMNREINNPMFRFLFENQTPAHVYY. Ser-484 carries the phosphoserine modification. Positions 533 to 678 constitute a CID domain; the sequence is LKEEQRDKLE…KLQNIFLGLV (146 aa). Thr-718 carries the phosphothreonine modification. Glycyl lysine isopeptide (Lys-Gly) (interchain with G-Cter in SUMO2) cross-links involve residues Lys-747 and Lys-748. Position 759 is an N6-acetyllysine; alternate (Lys-759). Lys-759 is covalently cross-linked (Glycyl lysine isopeptide (Lys-Gly) (interchain with G-Cter in SUMO2); alternate). Disordered stretches follow at residues 777 to 840 and 854 to 1028; these read KWEL…EEKR and QDEL…KNKH. A coiled-coil region spans residues 779-809; it reads ELFDQHEESEEEENQNQEEESEDEEDTQSSK. The segment covering 785-805 has biased composition (acidic residues); it reads EESEEEENQNQEEESEDEEDT. Phosphoserine occurs at positions 787, 799, and 810. 2 stretches are compositionally biased toward basic and acidic residues: residues 809–840 and 873–921; these read KSEE…EEKR and QVEH…TPTR. Glycyl lysine isopeptide (Lys-Gly) (interchain with G-Cter in SUMO2) cross-links involve residues Lys-821, Lys-828, and Lys-831. Residues 836-914 adopt a coiled-coil conformation; sequence SEEKRAKLRE…ESRSKDEKEK (79 aa). Thr-930 is modified (phosphothreonine). Phosphoserine occurs at positions 945 and 947. Residues 949-979 are compositionally biased toward basic and acidic residues; it reads KSERSERSERSHKESSRSRSSHKDSPRDVSK. The span at 990-1028 shows a compositional bias: basic residues; the sequence is TPKRSRRSRSRSPKKSGKKSRSQSRSPHRSHKKSKKNKH.

The protein belongs to the splicing factor SR family. In terms of assembly, interacts with ERBB4.

The protein localises to the nucleus. This is U2 snRNP-associated SURP motif-containing protein (U2SURP) from Pongo abelii (Sumatran orangutan).